The sequence spans 248 residues: PF03932 family protein CutC (248 aa).

It belongs to the CutC family. In terms of assembly, homodimer.

Its subcellular location is the cytoplasm. The protein is PF03932 family protein CutC of Escherichia coli (strain 55989 / EAEC).